The sequence spans 860 residues: Beta-glucosidase 1 (860 aa).

A signal peptide spans 1 to 19 (MKLSWLEAAALTAASVVSA). N-linked (GlcNAc...) asparagine glycans are attached at residues Asn61, Asn211, and Asn252. Asp280 is a catalytic residue. N-linked (GlcNAc...) asparagine glycans are attached at residues Asn315, Asn322, Asn354, Asn387, Asn442, Asn523, Asn542, Asn564, Asn658, Asn668, Asn690, and Asn712.

Belongs to the glycosyl hydrolase 3 family.

The catalysed reaction is Hydrolysis of terminal, non-reducing beta-D-glucosyl residues with release of beta-D-glucose.. The protein operates within glycan metabolism; cellulose degradation. In Aspergillus aculeatus, this protein is Beta-glucosidase 1.